Reading from the N-terminus, the 456-residue chain is UDP-N-acetylmuramoylalanine--D-glutamate ligase (456 aa).

Position 122–128 (122–128) interacts with ATP; sequence GSNGKST.

This sequence belongs to the MurCDEF family.

The protein localises to the cytoplasm. The catalysed reaction is UDP-N-acetyl-alpha-D-muramoyl-L-alanine + D-glutamate + ATP = UDP-N-acetyl-alpha-D-muramoyl-L-alanyl-D-glutamate + ADP + phosphate + H(+). It participates in cell wall biogenesis; peptidoglycan biosynthesis. Its function is as follows. Cell wall formation. Catalyzes the addition of glutamate to the nucleotide precursor UDP-N-acetylmuramoyl-L-alanine (UMA). In Saccharophagus degradans (strain 2-40 / ATCC 43961 / DSM 17024), this protein is UDP-N-acetylmuramoylalanine--D-glutamate ligase.